A 313-amino-acid chain; its full sequence is HPr kinase/phosphorylase (313 aa).

Residues H140 and K161 contribute to the active site. 155-162 (GNSGAGKS) provides a ligand contact to ATP. S162 provides a ligand contact to Mg(2+). The active-site Proton acceptor; for phosphorylation activity. Proton donor; for dephosphorylation activity is D179. The segment at 203-212 (IEVRGLGILN) is important for the catalytic mechanism of both phosphorylation and dephosphorylation. E204 contacts Mg(2+). Residue R246 is part of the active site. The tract at residues 267 to 272 (PVAAGR) is important for the catalytic mechanism of dephosphorylation.

This sequence belongs to the HPrK/P family. In terms of assembly, homohexamer. Requires Mg(2+) as cofactor.

It carries out the reaction [HPr protein]-L-serine + ATP = [HPr protein]-O-phospho-L-serine + ADP + H(+). The catalysed reaction is [HPr protein]-O-phospho-L-serine + phosphate + H(+) = [HPr protein]-L-serine + diphosphate. In terms of biological role, catalyzes the ATP- as well as the pyrophosphate-dependent phosphorylation of a specific serine residue in HPr, a phosphocarrier protein of the phosphoenolpyruvate-dependent sugar phosphotransferase system (PTS). HprK/P also catalyzes the pyrophosphate-producing, inorganic phosphate-dependent dephosphorylation (phosphorolysis) of seryl-phosphorylated HPr (P-Ser-HPr). This Azoarcus sp. (strain BH72) protein is HPr kinase/phosphorylase.